A 494-amino-acid polypeptide reads, in one-letter code: BTB/POZ domain and ankyrin repeat-containing protein NH5.2 (494 aa).

Residues 25 to 131 (SDVAFSVEGR…LYSGQASVAA (107 aa)) enclose the BTB domain. A disordered region spans residues 60–95 (NHQPPPPPPPPLNWPTAGGGGGGSGGGGRGGAGGGG). Residues 61–72 (HQPPPPPPPPLN) are compositionally biased toward pro residues. Over residues 76 to 95 (AGGGGGGSGGGGRGGAGGGG) the composition is skewed to gly residues. Residues 137–151 (LPGCGARGCWHTRCG) form a C2HC NPR-type zinc finger. The Zn(2+) site is built by C140, C145, H147, and C150. ANK repeat units lie at residues 275–303 (NKIRRMRRALDAADIELVKLMVMGEGLDL), 304–334 (DDALAVHYAVQHCNRDVVKALLELGAADVNS), 339–368 (TGKTALHLAAEMVSPDMVSVLLDHHADPNS), and 372–406 (DGVTPLDVLRSLTSEFLFKGAVPGLTHIEPNKLRL). 2 disordered regions span residues 421–443 (DDGAPVTGGEAGGSDGGNFPRSD) and 471–494 (GEGRKSNNGRGSPPPAMYFPNGFA).

This sequence belongs to the plant 'ANKYRIN-BTB/POZ' family. 'NOOT-BOP-COCH-like' (NBCL) subfamily. In terms of assembly, homodimer. Interacts with TGAL5, TGAL7, TGAL8 and TGAL9.

The protein resides in the nucleus. The protein localises to the cytoplasm. It functions in the pathway protein modification; protein ubiquitination. May act as a substrate-specific adapter of an E3 ubiquitin-protein ligase complex (CUL3-RBX1-BTB) which mediates the ubiquitination and subsequent proteasomal degradation of target proteins. Transcriptional co-regulator involved in the promotion of leaf and floral meristem fate and determinacy. Required for the abscission of senescent organs, probably by regulating the cell wall disorganization in abscission zones (AZs, e.g. pulvini at the base of leaves). The sequence is that of BTB/POZ domain and ankyrin repeat-containing protein NH5.2 from Oryza sativa subsp. japonica (Rice).